The following is a 160-amino-acid chain: Ribosomal RNA large subunit methyltransferase H (160 aa).

S-adenosyl-L-methionine-binding positions include leucine 76, glycine 108, and 127–132; that span reads FGALTW.

This sequence belongs to the RNA methyltransferase RlmH family. As to quaternary structure, homodimer.

The protein localises to the cytoplasm. It carries out the reaction pseudouridine(1915) in 23S rRNA + S-adenosyl-L-methionine = N(3)-methylpseudouridine(1915) in 23S rRNA + S-adenosyl-L-homocysteine + H(+). In terms of biological role, specifically methylates the pseudouridine at position 1915 (m3Psi1915) in 23S rRNA. This is Ribosomal RNA large subunit methyltransferase H from Mesorhizobium japonicum (strain LMG 29417 / CECT 9101 / MAFF 303099) (Mesorhizobium loti (strain MAFF 303099)).